Here is a 512-residue protein sequence, read N- to C-terminus: UDP-N-acetylmuramate--L-alanine ligase (512 aa).

132 to 138 provides a ligand contact to ATP; sequence GAHGKTT.

This sequence belongs to the MurCDEF family.

The protein resides in the cytoplasm. The catalysed reaction is UDP-N-acetyl-alpha-D-muramate + L-alanine + ATP = UDP-N-acetyl-alpha-D-muramoyl-L-alanine + ADP + phosphate + H(+). It functions in the pathway cell wall biogenesis; peptidoglycan biosynthesis. Functionally, cell wall formation. In Bifidobacterium longum subsp. infantis (strain ATCC 15697 / DSM 20088 / JCM 1222 / NCTC 11817 / S12), this protein is UDP-N-acetylmuramate--L-alanine ligase.